A 239-amino-acid polypeptide reads, in one-letter code: Endonuclease V (239 aa).

2 residues coordinate Mg(2+): Asp-50 and Asp-118.

The protein belongs to the endonuclease V family. Requires Mg(2+) as cofactor.

It is found in the cytoplasm. It catalyses the reaction Endonucleolytic cleavage at apurinic or apyrimidinic sites to products with a 5'-phosphate.. In terms of biological role, DNA repair enzyme involved in the repair of deaminated bases. Selectively cleaves double-stranded DNA at the second phosphodiester bond 3' to a deoxyinosine leaving behind the intact lesion on the nicked DNA. This is Endonuclease V from Xylella fastidiosa (strain Temecula1 / ATCC 700964).